Here is a 269-residue protein sequence, read N- to C-terminus: Energy-coupling factor transporter ATP-binding protein EcfA1 (269 aa).

In terms of domain architecture, ABC transporter spans I8–D242. G42–S49 is a binding site for ATP.

Belongs to the ABC transporter superfamily. Energy-coupling factor EcfA family. Forms a stable energy-coupling factor (ECF) transporter complex composed of 2 membrane-embedded substrate-binding proteins (S component), 2 ATP-binding proteins (A component) and 2 transmembrane proteins (T component).

It localises to the cell membrane. ATP-binding (A) component of a common energy-coupling factor (ECF) ABC-transporter complex. Unlike classic ABC transporters this ECF transporter provides the energy necessary to transport a number of different substrates. The chain is Energy-coupling factor transporter ATP-binding protein EcfA1 from Staphylococcus aureus (strain bovine RF122 / ET3-1).